The following is a 261-amino-acid chain: Uridine-cytidine kinase 2-B (261 aa).

Residue 29–37 (GGTASGKSS) participates in ATP binding. Substrate contacts are provided by Asp-86, Tyr-114, His-119, Arg-168, Arg-178, and Gln-186. Residue Asp-215 coordinates ATP. Residues 238 to 261 (RQNGFQNGHGTPRQRRTSESSRPH) form a disordered region.

This sequence belongs to the uridine kinase family. Homotetramer.

The enzyme catalyses uridine + ATP = UMP + ADP + H(+). It catalyses the reaction cytidine + ATP = CMP + ADP + H(+). The protein operates within pyrimidine metabolism; CTP biosynthesis via salvage pathway; CTP from cytidine: step 1/3. It functions in the pathway pyrimidine metabolism; UMP biosynthesis via salvage pathway; UMP from uridine: step 1/1. Functionally, phosphorylates uridine and cytidine to uridine monophosphate and cytidine monophosphate. Does not phosphorylate deoxyribonucleosides or purine ribonucleosides. Can use ATP or GTP as a phosphate donor. This chain is Uridine-cytidine kinase 2-B (uck2b), found in Danio rerio (Zebrafish).